The chain runs to 164 residues: Putative L,D-transpeptidase YkuD (164 aa).

Residues 2–45 enclose the LysM domain; it reads LTYQVKQGDTLNSIAADFRISTAALLQANPSLQAGLTAGQSIVI. The L,D-TPase catalytic domain occupies 56-163; that stretch reads YHIAVSIGAK…VPNGTRVTIN (108 aa). The Proton donor/acceptor role is filled by histidine 123. The Nucleophile role is filled by cysteine 139.

This sequence belongs to the YkuD family. In terms of assembly, monomer.

Its subcellular location is the spore wall. It participates in cell wall biogenesis; peptidoglycan biosynthesis. Probable enzyme that may play an important role in cell wall biology. The polypeptide is Putative L,D-transpeptidase YkuD (ykuD) (Bacillus subtilis (strain 168)).